The following is a 171-amino-acid chain: Endoribonuclease YbeY (171 aa).

Zn(2+)-binding residues include histidine 126, histidine 130, and histidine 136.

The protein belongs to the endoribonuclease YbeY family. It depends on Zn(2+) as a cofactor.

It is found in the cytoplasm. Single strand-specific metallo-endoribonuclease involved in late-stage 70S ribosome quality control and in maturation of the 3' terminus of the 16S rRNA. In Rhizobium etli (strain CIAT 652), this protein is Endoribonuclease YbeY.